The sequence spans 120 residues: Non-specific lipid-transfer protein 1 (120 aa).

The signal sequence occupies residues 1-25; it reads MARSMKLACVALVICMVVIAPMAEA. 4 disulfides stabilise this stretch: C29/C78, C39/C55, C56/C101, and C76/C115. Residue F120 is a propeptide.

Belongs to the plant LTP family. Expressed in roots, stem, leaves and tendrils of the mature plant.

Plant non-specific lipid-transfer proteins transfer phospholipids as well as galactolipids across membranes. May play a role in wax or cutin deposition in the cell walls of expanding epidermal cells and certain secretory tissues. Binds saturated and unsaturated lipids, jasmonic acid and lysolipids. Has antifungal activity against A.niger VKM F-2259 (IC(50)=40 uM), F.oxysporum TCXA-4 (IC(50)=20-40), F.solani VKM F-142 (IC(50)=20-40 uM) and N.crassa VKM F-184 (IC(50)=40 uM). Has weak antibacterial activity against A.tumefaciens A281, C.michiganensis VKM Ac-1144 and P.syringae VKM B-1546. This Pisum sativum (Garden pea) protein is Non-specific lipid-transfer protein 1.